Consider the following 525-residue polypeptide: CTP synthase (525 aa).

Positions 1–269 are amidoligase domain; that stretch reads MKYIIVTGGV…ADAITTHLHL (269 aa). Ser-12 provides a ligand contact to CTP. Ser-12 provides a ligand contact to UTP. Residues 13–18 and Asp-70 contribute to the ATP site; that span reads GLGKGI. Residues Asp-70 and Glu-144 each contribute to the Mg(2+) site. CTP is bound by residues 151-153, 190-195, and Lys-226; these read DIE and KTKPTQ. Residues 190–195 and Lys-226 contribute to the UTP site; that span reads KTKPTQ. The Glutamine amidotransferase type-1 domain occupies 292–524; it reads VAIVSKYGIE…VSACRKNKKT (233 aa). Residue Gly-348 coordinates L-glutamine. Cys-375 (nucleophile; for glutamine hydrolysis) is an active-site residue. Residues 376-379, Glu-399, and Arg-454 contribute to the L-glutamine site; that span reads LGFQ. Catalysis depends on residues His-497 and Glu-499.

The protein belongs to the CTP synthase family. Homotetramer.

The enzyme catalyses UTP + L-glutamine + ATP + H2O = CTP + L-glutamate + ADP + phosphate + 2 H(+). It carries out the reaction L-glutamine + H2O = L-glutamate + NH4(+). The catalysed reaction is UTP + NH4(+) + ATP = CTP + ADP + phosphate + 2 H(+). It functions in the pathway pyrimidine metabolism; CTP biosynthesis via de novo pathway; CTP from UDP: step 2/2. Allosterically activated by GTP, when glutamine is the substrate; GTP has no effect on the reaction when ammonia is the substrate. The allosteric effector GTP functions by stabilizing the protein conformation that binds the tetrahedral intermediate(s) formed during glutamine hydrolysis. Inhibited by the product CTP, via allosteric rather than competitive inhibition. Functionally, catalyzes the ATP-dependent amination of UTP to CTP with either L-glutamine or ammonia as the source of nitrogen. Regulates intracellular CTP levels through interactions with the four ribonucleotide triphosphates. This Methanosphaerula palustris (strain ATCC BAA-1556 / DSM 19958 / E1-9c) protein is CTP synthase.